Consider the following 127-residue polypeptide: Major sperm protein 55/57 (127 aa).

A2 is modified (N-acetylalanine). Positions 9 to 126 constitute an MSP domain; it reads DIQTQPGTKI…RRKNLPIEYN (118 aa).

Sperm.

It is found in the cell projection. Its subcellular location is the pseudopodium. The protein localises to the cytoplasm. The protein resides in the cytoskeleton. Its function is as follows. Central component in molecular interactions underlying sperm crawling. Forms an extensive filament system that extends from sperm villipoda, along the leading edge of the pseudopod. The polypeptide is Major sperm protein 55/57 (msp-55) (Caenorhabditis elegans).